The chain runs to 273 residues: Dermonecrotic toxin LdSicTox-alphaIB1bii (273 aa).

His5 is an active-site residue. The Mg(2+) site is built by Glu25 and Asp27. His41 serves as the catalytic Nucleophile. Cystine bridges form between Cys45-Cys51 and Cys47-Cys190. Residue Asp85 participates in Mg(2+) binding. The N-linked (GlcNAc...) asparagine glycan is linked to Asn250.

It belongs to the arthropod phospholipase D family. Class II subfamily. Requires Mg(2+) as cofactor. As to expression, expressed by the venom gland.

It is found in the secreted. The catalysed reaction is an N-(acyl)-sphingosylphosphocholine = an N-(acyl)-sphingosyl-1,3-cyclic phosphate + choline. It carries out the reaction an N-(acyl)-sphingosylphosphoethanolamine = an N-(acyl)-sphingosyl-1,3-cyclic phosphate + ethanolamine. The enzyme catalyses a 1-acyl-sn-glycero-3-phosphocholine = a 1-acyl-sn-glycero-2,3-cyclic phosphate + choline. It catalyses the reaction a 1-acyl-sn-glycero-3-phosphoethanolamine = a 1-acyl-sn-glycero-2,3-cyclic phosphate + ethanolamine. Dermonecrotic toxins cleave the phosphodiester linkage between the phosphate and headgroup of certain phospholipids (sphingolipid and lysolipid substrates), forming an alcohol (often choline) and a cyclic phosphate. This toxin acts on sphingomyelin (SM). It may also act on ceramide phosphoethanolamine (CPE), lysophosphatidylcholine (LPC) and lysophosphatidylethanolamine (LPE), but not on lysophosphatidylserine (LPS), and lysophosphatidylglycerol (LPG). It acts by transphosphatidylation, releasing exclusively cyclic phosphate products as second products. Induces dermonecrosis, hemolysis, increased vascular permeability, edema, inflammatory response, and platelet aggregation. The protein is Dermonecrotic toxin LdSicTox-alphaIB1bii of Loxosceles deserta (Desert recluse spider).